Reading from the N-terminus, the 221-residue chain is Large ribosomal subunit protein uL3 (221 aa).

This sequence belongs to the universal ribosomal protein uL3 family. In terms of assembly, part of the 50S ribosomal subunit. Forms a cluster with proteins L14 and L19.

One of the primary rRNA binding proteins, it binds directly near the 3'-end of the 23S rRNA, where it nucleates assembly of the 50S subunit. The chain is Large ribosomal subunit protein uL3 from Nocardia farcinica (strain IFM 10152).